Consider the following 306-residue polypeptide: Curved DNA-binding protein (306 aa).

Residues 5–69 (DYYAIMGVKP…QRRAEYDQMW (65 aa)) enclose the J domain.

Its subcellular location is the cytoplasm. It is found in the nucleoid. Functionally, DNA-binding protein that preferentially recognizes a curved DNA sequence. It is probably a functional analog of DnaJ; displays overlapping activities with DnaJ, but functions under different conditions, probably acting as a molecular chaperone in an adaptive response to environmental stresses other than heat shock. Lacks autonomous chaperone activity; binds native substrates and targets them for recognition by DnaK. Its activity is inhibited by the binding of CbpM. This Escherichia coli (strain SMS-3-5 / SECEC) protein is Curved DNA-binding protein.